We begin with the raw amino-acid sequence, 282 residues long: Phosphate import ATP-binding protein PstB (282 aa).

Residues 1 to 33 (MNMAETQLNPIARPTAPAGFDPAQSGQSQAPSR) are disordered. Positions 36-277 (IEINDLNFFY…PVRKETEDYI (242 aa)) constitute an ABC transporter domain. Position 68–75 (68–75 (GPSGCGKS)) interacts with ATP.

This sequence belongs to the ABC transporter superfamily. Phosphate importer (TC 3.A.1.7) family. In terms of assembly, the complex is composed of two ATP-binding proteins (PstB), two transmembrane proteins (PstC and PstA) and a solute-binding protein (PstS).

The protein resides in the cell inner membrane. The enzyme catalyses phosphate(out) + ATP + H2O = ADP + 2 phosphate(in) + H(+). In terms of biological role, part of the ABC transporter complex PstSACB involved in phosphate import. Responsible for energy coupling to the transport system. In Paraburkholderia xenovorans (strain LB400), this protein is Phosphate import ATP-binding protein PstB.